The primary structure comprises 382 residues: Pyruvate dehydrogenase E1 component subunit beta, mitochondrial (382 aa).

The N-terminal 46 residues, 1–46 (MSRFLRPAFRLATTATRASTIRPTPSSLITKAAAVPTTRLLQKRSY), are a transit peptide targeting the mitochondrion. Glutamate 112 serves as a coordination point for thiamine diphosphate. K(+) contacts are provided by isoleucine 165, alanine 213, isoleucine 214, aspartate 216, and asparagine 218.

Eukaryotic pyruvate dehydrogenase (PDH) complexes are organized as a core consisting of the oligomeric dihydrolipoamide acetyl-transferase (E2), around which are arranged multiple copies of pyruvate dehydrogenase (E1), dihydrolipoamide dehydrogenase (E3) and protein X (E3BP) bound by non-covalent bonds. The Chaetomium thermophilum PDH complex contains 60 E2 units, 12 E3BP units, about 20 E1 units, and 12 or more E3 units. The units are organized in 1 E2 60-mer, 4 E3BP trimers, about 20 E1 tetramers, and a maximum of 12 E3 dimers. Pyruvate dehydrogenase (E1) is active as a tetramer of 2 alpha and 2 beta subunits. The E3BP trimers are bound inside the icosahedral core with tetrahedral symmetry. It depends on thiamine diphosphate as a cofactor.

It is found in the mitochondrion. It catalyses the reaction N(6)-[(R)-lipoyl]-L-lysyl-[protein] + pyruvate + H(+) = N(6)-[(R)-S(8)-acetyldihydrolipoyl]-L-lysyl-[protein] + CO2. In terms of biological role, the 10-megadalton pyruvate dehydrogenase complex contains multiple copies of three enzymatic components: pyruvate dehydrogenase (E1), dihydrolipoamide acetyltransferase (E2) and lipoamide dehydrogenase (E3) and catalyzes the overall oxidative decarboxylation of pyruvate to form acetyl-CoA and CO(2). Within the complex, pyruvate and thiamine pyrophosphate (TPP or vitamin B1) are bound by pyruvate dehydrogenase E1 subunits alpha and beta and pyruvate is decarboxylated leading to the 2-carbon hydrohyethyl bound to TPP. The E2 component contains covalently-bound lipoyl cofactors and transfers the hydroxyethyl group from TPP to an oxidized form of covalently bound lipoamide, and the resulting acetyl group is then transferred to free coenzyme A to form acetyl-CoA and reduced dihydrolipoamide-E2. Finally, the flavoprotein dihydrolipoamide dehydrogenase (E3) re-oxidizes the lipoyl group of dihydrolipoamide-E2 to form lipoamide-E2 and NADH. A fourth subunit, E3BP, is responsible for tethering E3 in proximity to the core, forming the entire metabolon. The polypeptide is Pyruvate dehydrogenase E1 component subunit beta, mitochondrial (Chaetomium thermophilum (strain DSM 1495 / CBS 144.50 / IMI 039719) (Thermochaetoides thermophila)).